A 414-amino-acid polypeptide reads, in one-letter code: Histidine--tRNA ligase (414 aa).

The protein belongs to the class-II aminoacyl-tRNA synthetase family. In terms of assembly, homodimer.

The protein localises to the cytoplasm. It catalyses the reaction tRNA(His) + L-histidine + ATP = L-histidyl-tRNA(His) + AMP + diphosphate + H(+). This chain is Histidine--tRNA ligase (hisS), found in Mycoplasma pneumoniae (strain ATCC 29342 / M129 / Subtype 1) (Mycoplasmoides pneumoniae).